Here is a 151-residue protein sequence, read N- to C-terminus: Mating pheromone 3 (151 aa).

The first 16 residues, 1–16, serve as a signal peptide directing secretion; sequence MKAIFIILAILMVTQA. Residues 17 to 52 constitute a propeptide that is removed on maturation; it reads FKMTSKVNTKLQSQIQSKFQSKNKLASTFQTSSQLK.

The protein resides in the secreted. Its function is as follows. Mating ciliate pheromones (or gamones) are diffusible extracellular communication signals that distinguish different intraspecific classes of cells commonly referred to as 'mating types'. They prepare the latter for conjugation by changing their cell surface properties. This is Mating pheromone 3 (PHR3) from Euplotoides octocarinatus (Freshwater ciliate).